A 461-amino-acid chain; its full sequence is MAAAAAAATVEAVGVAGGRRRRSGSVALGDLLRREASAERASASASAGAGGRERERRPSVAAGQACRAKKGEDFALLKPACERLPAGGAPFSAFALFDGHNGSGAAVYAKENILSNVMCCVPADLSGDEWLAALPRALVAGFVKTDKDFQTRAHSSGTTVTFVIIDGYVVTVASVGDSRCVLEAEGTIYHLSADHRFDASEEEVGRVTECGGEVGRLNVVGGAEIGPLRCWPGGLCLSRSIGDQDVGEFIIPVPYVKQIKLSSAGGRIIISSDGVWDALTVDTAFSCARGLPPEAAADQIVKEAIASKGLRDDTTCIVIDIIPPEKISPTVQPAKKAGKGLFKNIFYKKATSDSPCHADKDQCTQPDLVEEVFEDGCPSLSRRLDSEYPVRNMFKLFICAICQVELESGQGISIHEGLSKSGKLRPWDGPFLCHSCQEKKEAMEGKRHSRDSSSRNSGSSE.

Residues 34 to 63 (REASAERASASASAGAGGRERERRPSVAAG) are disordered. Positions 57–321 (RPSVAAGQAC…DDTTCIVIDI (265 aa)) constitute a PPM-type phosphatase domain. The Mn(2+) site is built by Asp-98, Gly-99, Asp-273, and Asp-312. Over residues 439–453 (KKEAMEGKRHSRDSS) the composition is skewed to basic and acidic residues. The disordered stretch occupies residues 439–461 (KKEAMEGKRHSRDSSSRNSGSSE).

This sequence belongs to the PP2C family. It depends on Mg(2+) as a cofactor. Mn(2+) serves as cofactor. Expressed in leaves, leaf sheaths, panicles, nodes and internodes. Expressed at low levels in roots and stems.

Its subcellular location is the nucleus. The protein localises to the cytoplasm. The catalysed reaction is O-phospho-L-seryl-[protein] + H2O = L-seryl-[protein] + phosphate. It catalyses the reaction O-phospho-L-threonyl-[protein] + H2O = L-threonyl-[protein] + phosphate. In terms of biological role, mediates the negative regulation of osmotic and salt stress tolerance through regulation of the jasmonate and abscisic acid signaling pathways and modulation of the raffinose family oligosaccharide metabolism pathway. The protein is Probable protein phosphatase 2C 40 of Oryza sativa subsp. japonica (Rice).